Reading from the N-terminus, the 270-residue chain is Putative phosphoenolpyruvate synthase regulatory protein (270 aa).

Gly-150–Thr-157 contributes to the ADP binding site.

The protein belongs to the pyruvate, phosphate/water dikinase regulatory protein family. PSRP subfamily.

The enzyme catalyses [pyruvate, water dikinase] + ADP = [pyruvate, water dikinase]-phosphate + AMP + H(+). The catalysed reaction is [pyruvate, water dikinase]-phosphate + phosphate + H(+) = [pyruvate, water dikinase] + diphosphate. In terms of biological role, bifunctional serine/threonine kinase and phosphorylase involved in the regulation of the phosphoenolpyruvate synthase (PEPS) by catalyzing its phosphorylation/dephosphorylation. In Shewanella denitrificans (strain OS217 / ATCC BAA-1090 / DSM 15013), this protein is Putative phosphoenolpyruvate synthase regulatory protein.